The sequence spans 79 residues: uncharacterized protein (79 aa).

It is found in the mitochondrion. This is an uncharacterized protein from Marchantia polymorpha (Common liverwort).